The chain runs to 395 residues: GDP-mannose 4,6 dehydratase (395 aa).

Composition is skewed to polar residues over residues methionine 1–aspartate 13 and glutamate 24–threonine 36. A disordered region spans residues methionine 1–serine 44. Residues glycine 53 to aspartate 58, aspartate 109 to methionine 110, leucine 131 to serine 135, and tyrosine 146 contribute to the NADP(+) site. The active site involves threonine 178. Catalysis depends on nucleophile residues glutamate 180 and tyrosine 202. Residues lysine 206, histidine 232, and arginine 237 each contribute to the NADP(+) site.

It belongs to the NAD(P)-dependent epimerase/dehydratase family. GDP-mannose 4,6-dehydratase subfamily. The cofactor is NADP(+).

It catalyses the reaction GDP-alpha-D-mannose = GDP-4-dehydro-alpha-D-rhamnose + H2O. The protein operates within nucleotide-sugar biosynthesis; GDP-L-fucose biosynthesis via de novo pathway; GDP-L-fucose from GDP-alpha-D-mannose: step 1/2. Its function is as follows. Catalyzes the conversion of GDP-D-mannose to GDP-4-dehydro-6-deoxy-D-mannose (also known as GDP-4-keto-6-deoxy-D-mannose or GDP-4-dehydro-alpha-D-rhamnose), an essential step in the synthesis of GDP-fucose from GDP-mannose. The sequence is that of GDP-mannose 4,6 dehydratase (Gmd) from Drosophila melanogaster (Fruit fly).